A 318-amino-acid polypeptide reads, in one-letter code: MGTAIPEEPLGSTEKSIPLVGFGTVEYPLNEAFKERVLHAIKLGYRHFDTAASYPSEQPLGEALAEALRLGLVKSRDELFITSKLWLTDSYCGRVIPGLQKTLKTLGLEYLDLYLVHFPVSLIPEATYPVKPEDIRPFDYEGVWEEMEKCQELGLTKTIGVSNFTCKKLERLLATAKIPPAVNQVEMNPIWQQKKLREYCKEKGIHFSAFSPLGAVGTNWGHNRVMENEVLKQIAKAKGKTVAQVAIRWVYQQGVSVIVKSFNKERMEQNLDIFDWELSAEELQKIEQIPQYRGSRAEAYLSENGPFRTVEEIWDGEI.

Tyrosine 54 serves as the catalytic Proton donor.

Belongs to the aldo/keto reductase family. In terms of tissue distribution, expressed in flowers, maturing fruits and in juice vesicles.

It catalyses the reaction (1S)-1,7-diacetoxy-luvungin A + AH2 + H2O = (1R,2R,3S,8R,10R,11R,15S,16S)-3-(acetyloxy)-15-[(4R)-4-[(2S)-3,3-dimethyloxiran-2-yl]-1,4-dihydroxybutan-2-yl]-2,7,7,11,16-pentamethyl-5-oxo-6-oxatetracyclo[9.7.0.0(2,8).0(12,16)]octadec-12-en-10-yl acetate + acetate + A + H(+). The protein operates within secondary metabolite biosynthesis; terpenoid biosynthesis. Functionally, aldo-keto reductase involved in the biosynthesis of limonoids triterpene natural products such as limonin, a compound with insecticidal activity responsible for the bitter taste in citrus. Can use (1S)-1,7-diacetoxy-luvungin A as substrate. This chain is (1S)-1,7-diacetoxy-luvungin A aldo-keto reductase, found in Citrus sinensis (Sweet orange).